We begin with the raw amino-acid sequence, 465 residues long: UDP-N-acetylmuramoylalanine--D-glutamate ligase (465 aa).

127 to 133 is a binding site for ATP; that stretch reads GSNGKST.

The protein belongs to the MurCDEF family.

It localises to the cytoplasm. The catalysed reaction is UDP-N-acetyl-alpha-D-muramoyl-L-alanine + D-glutamate + ATP = UDP-N-acetyl-alpha-D-muramoyl-L-alanyl-D-glutamate + ADP + phosphate + H(+). The protein operates within cell wall biogenesis; peptidoglycan biosynthesis. In terms of biological role, cell wall formation. Catalyzes the addition of glutamate to the nucleotide precursor UDP-N-acetylmuramoyl-L-alanine (UMA). This chain is UDP-N-acetylmuramoylalanine--D-glutamate ligase, found in Cereibacter sphaeroides (strain ATCC 17025 / ATH 2.4.3) (Rhodobacter sphaeroides).